A 507-amino-acid chain; its full sequence is ATP synthase subunit alpha, chloroplastic (507 aa).

170-177 (GDRQTGKT) lines the ATP pocket.

This sequence belongs to the ATPase alpha/beta chains family. As to quaternary structure, F-type ATPases have 2 components, CF(1) - the catalytic core - and CF(0) - the membrane proton channel. CF(1) has five subunits: alpha(3), beta(3), gamma(1), delta(1), epsilon(1). CF(0) has four main subunits: a, b, b' and c.

It localises to the plastid. The protein localises to the chloroplast thylakoid membrane. It carries out the reaction ATP + H2O + 4 H(+)(in) = ADP + phosphate + 5 H(+)(out). In terms of biological role, produces ATP from ADP in the presence of a proton gradient across the membrane. The alpha chain is a regulatory subunit. This Illicium oligandrum (Star anise) protein is ATP synthase subunit alpha, chloroplastic.